A 329-amino-acid polypeptide reads, in one-letter code: D-alanine--D-alanine ligase (329 aa).

The ATP-grasp domain occupies 120–326; it reads KLWYDALDIP…FHEFLEDCIN (207 aa). An ATP-binding site is contributed by 150-205; it reads AFEKWGKVFVKAARQGSSVGCYSVAEKQAIAKAVNDAFGYSDQVLVEKAVKPRELE. Mg(2+) contacts are provided by Asp-280, Glu-293, and Asn-295.

It belongs to the D-alanine--D-alanine ligase family. Mg(2+) is required as a cofactor. Requires Mn(2+) as cofactor.

It is found in the cytoplasm. It carries out the reaction 2 D-alanine + ATP = D-alanyl-D-alanine + ADP + phosphate + H(+). It functions in the pathway cell wall biogenesis; peptidoglycan biosynthesis. Its function is as follows. Cell wall formation. This chain is D-alanine--D-alanine ligase, found in Vibrio parahaemolyticus serotype O3:K6 (strain RIMD 2210633).